The sequence spans 604 residues: DNA polymerase alpha subunit B (604 aa).

The disordered stretch occupies residues 109 to 171 (ETLLNSYTTP…KYSSRSNRGE (63 aa)). Residues 113-141 (NSYTTPSKGSQKRTITTPETPLTKRSVSA) are compositionally biased toward polar residues. A phosphothreonine mark is found at threonine 129 and threonine 132. Phosphoserine is present on residues serine 143, serine 149, serine 154, and serine 156. Residues 143–160 (SPHQLLSPSSFSPSATPP) show a composition bias toward low complexity.

Belongs to the DNA polymerase alpha subunit B family. Component of the alpha DNA polymerase complex (also known as the alpha DNA polymerase-primase complex) consisting of four subunits: the catalytic subunit POLA1, the regulatory subunit POLA2, and the primase complex subunits PRIM1 and PRIM2 respectively. Within the complex, POLA1 directly interacts with PRIM2. In terms of processing, phosphorylated in a cell cycle-dependent manner, in G2/M phase.

Its subcellular location is the nucleus. Its function is as follows. Accessory subunit of the DNA polymerase alpha complex (also known as the alpha DNA polymerase-primase complex) which plays an essential role in the initiation of DNA synthesis. During the S phase of the cell cycle, the DNA polymerase alpha complex (composed of a catalytic subunit POLA1, an accessory subunit POLA2 and two primase subunits, the catalytic subunit PRIM1 and the regulatory subunit PRIM2) is recruited to DNA at the replicative forks via direct interactions with MCM10 and WDHD1. The primase subunit of the polymerase alpha complex initiates DNA synthesis by oligomerising short RNA primers on both leading and lagging strands. These primers are initially extended by the polymerase alpha catalytic subunit and subsequently transferred to polymerase delta and polymerase epsilon for processive synthesis on the lagging and leading strand, respectively. This Bos taurus (Bovine) protein is DNA polymerase alpha subunit B (POLA2).